The sequence spans 263 residues: 4-hydroxy-2-oxo-heptane-1,7-dioate aldolase (263 aa).

Residue His45 is the Proton acceptor of the active site. A substrate-binding site is contributed by Gln147. Glu149 is an a divalent metal cation binding site. Substrate-binding residues include Ala174 and Asp175. An a divalent metal cation-binding site is contributed by Asp175.

This sequence belongs to the HpcH/HpaI aldolase family. Homohexamer; trimer of dimers. A divalent metal cation is required as a cofactor.

The enzyme catalyses 4-hydroxy-2-oxoheptanedioate = succinate semialdehyde + pyruvate. It functions in the pathway aromatic compound metabolism; 4-hydroxyphenylacetate degradation; pyruvate and succinate semialdehyde from 4-hydroxyphenylacetate: step 7/7. Its function is as follows. Catalyzes the reversible retro-aldol cleavage of 4-hydroxy-2-ketoheptane-1,7-dioate (HKHD) to pyruvate and succinic semialdehyde. The polypeptide is 4-hydroxy-2-oxo-heptane-1,7-dioate aldolase (Salmonella enteritidis PT4 (strain P125109)).